The chain runs to 840 residues: Protein translocase subunit SecA (840 aa).

ATP-binding positions include Q89, 107 to 111 (GEGKT), and D514.

This sequence belongs to the SecA family. In terms of assembly, monomer and homodimer. Part of the essential Sec protein translocation apparatus which comprises SecA, SecYEG and auxiliary proteins SecDF-YajC and YidC.

It localises to the cell inner membrane. It is found in the cytoplasm. The enzyme catalyses ATP + H2O + cellular proteinSide 1 = ADP + phosphate + cellular proteinSide 2.. Its function is as follows. Part of the Sec protein translocase complex. Interacts with the SecYEG preprotein conducting channel. Has a central role in coupling the hydrolysis of ATP to the transfer of proteins into and across the cell membrane, serving as an ATP-driven molecular motor driving the stepwise translocation of polypeptide chains across the membrane. This chain is Protein translocase subunit SecA, found in Blochmanniella floridana.